The chain runs to 108 residues: Beta-defensin 126 (108 aa).

Positions M1 to G20 are cleaved as a signal peptide. Positions N21–D63 are in vitro binds to LPS, mediates antimicrobial activity and inhibits LPS-mediated inflammation. Disulfide bonds link C27-C58, C34-C52, and C38-C59.

It belongs to the beta-defensin family. Homodimer or homooligomer; disulfide-linked. Post-translationally, O-glycosylated; glycans contain alpha(2,3)-linked sialic acids.

The protein resides in the secreted. In terms of biological role, highly glycosylated atypical beta-defensin involved in several aspects of sperm function. Facilitates sperm transport in the female reproductive tract and contributes to sperm protection against immunodetection; both functions are probably implicating the negative surface charge provided by its O-linked oligosaccharides in the sperm glycocalyx. Involved in binding of sperm to oviductal epithelial cells to form a sperm reservoir until ovulation. Release from the sperm surface during capacitation and ovaluation by an elevation of oviductal fluid pH is unmasking other surface components and allows sperm to penetrate the cumulus matrix and bind to the zona pellucida of the oocyte. In vitro has antimicrobial activity and may inhibit LPS-mediated inflammation. In Pan troglodytes (Chimpanzee), this protein is Beta-defensin 126 (DEFB126).